A 302-amino-acid chain; its full sequence is Acetylglutamate kinase (302 aa).

Substrate contacts are provided by residues 68–69 (GG), Arg90, and Asn194.

It belongs to the acetylglutamate kinase family. ArgB subfamily.

It localises to the cytoplasm. It catalyses the reaction N-acetyl-L-glutamate + ATP = N-acetyl-L-glutamyl 5-phosphate + ADP. It functions in the pathway amino-acid biosynthesis; L-arginine biosynthesis; N(2)-acetyl-L-ornithine from L-glutamate: step 2/4. In terms of biological role, catalyzes the ATP-dependent phosphorylation of N-acetyl-L-glutamate. This Acinetobacter baumannii (strain AB307-0294) protein is Acetylglutamate kinase.